A 256-amino-acid polypeptide reads, in one-letter code: Thiazole synthase (256 aa).

The active-site Schiff-base intermediate with DXP is the K95. 1-deoxy-D-xylulose 5-phosphate-binding positions include G156, 182–183 (AG), and 204–205 (NT).

Belongs to the ThiG family. In terms of assembly, homotetramer. Forms heterodimers with either ThiH or ThiS.

The protein localises to the cytoplasm. The catalysed reaction is [ThiS sulfur-carrier protein]-C-terminal-Gly-aminoethanethioate + 2-iminoacetate + 1-deoxy-D-xylulose 5-phosphate = [ThiS sulfur-carrier protein]-C-terminal Gly-Gly + 2-[(2R,5Z)-2-carboxy-4-methylthiazol-5(2H)-ylidene]ethyl phosphate + 2 H2O + H(+). It functions in the pathway cofactor biosynthesis; thiamine diphosphate biosynthesis. Functionally, catalyzes the rearrangement of 1-deoxy-D-xylulose 5-phosphate (DXP) to produce the thiazole phosphate moiety of thiamine. Sulfur is provided by the thiocarboxylate moiety of the carrier protein ThiS. In vitro, sulfur can be provided by H(2)S. The sequence is that of Thiazole synthase from Salmonella schwarzengrund (strain CVM19633).